A 973-amino-acid polypeptide reads, in one-letter code: Short transient receptor potential channel 5 (973 aa).

Over methionine 1–lysine 325 the chain is Cytoplasmic. ANK repeat units lie at residues serine 30–asparagine 60, leucine 69–glycine 97, aspartate 98–glutamate 124, and proline 141–arginine 170. Zn(2+) is bound by residues histidine 172, cysteine 176, cysteine 178, and cysteine 181. Positions histidine 326–isoleucine 360 form an intramembrane region, discontinuously helical. Residues lysine 361–proline 363 lie on the Cytoplasmic side of the membrane. Residues phenylalanine 364–alanine 384 traverse the membrane as a helical segment. The Extracellular portion of the chain corresponds to serine 385–glutamate 404. The helical transmembrane segment at tryptophan 405–isoleucine 419 threads the bilayer. Residues glutamate 418, glutamate 421, asparagine 436, and aspartate 439 each coordinate Ca(2+). Topologically, residues lysine 420–aspartate 433 are cytoplasmic. Residues tryptophan 434–isoleucine 454 traverse the membrane as a helical segment. The Extracellular portion of the chain corresponds to valine 455 to leucine 476. Asparagine 461 is a glycosylation site (N-linked (GlcNAc...) asparagine). Residues isoleucine 477–phenylalanine 497 traverse the membrane as a helical segment. Residues threonine 498–arginine 512 are Cytoplasmic-facing. Residues methionine 513–leucine 535 traverse the membrane as a helical segment. Residues asparagine 536–threonine 603 are Extracellular-facing. Cysteine 553 and cysteine 558 are joined by a disulfide. Residues methionine 604–methionine 624 traverse the membrane as a helical segment. Topologically, residues asparagine 625–leucine 973 are cytoplasmic. 2 disordered regions span residues histidine 766–serine 794 and glycine 810–phenylalanine 837. The tract at residues threonine 971–leucine 973 is essential for binding to NHERF1 PDZ domain.

The protein belongs to the transient receptor (TC 1.A.4) family. STrpC subfamily. TRPC5 sub-subfamily. Homotetramer. Heterotetramer with TRPC1 and/or TRPC4. Each subunit in the homomeric ion channel (via ANK repeats) interacts with one copy of GTP-bound GNAI3; the interaction is direct and activates the ion channel. Interacts with TRPC4AP. Interacts with NHERF1. Interacts with MX1 and RNF24. Interacts (via C-terminus) with CABP1. Interacts with SESTD1 (via the spectrin 1 repeat). Interacts with PLSCR1. Interacts with PKD2L2. Expressed in brain with higher levels in fetal brain. Found in cerebellum and occipital pole.

The protein localises to the cell membrane. The catalysed reaction is Ca(2+)(in) = Ca(2+)(out). Its activity is regulated as follows. Activated by G-protein coupled receptors via direct interaction with GTP-bound GNAI3, which increases the channel sensitivity to phosphatidylinositol bisphosphate. May be activated by intracellular calcium store depletion. Calcium channel activity is enhanced by MYLK, that promotes its subcellular localization at the plasma membrane. Its function is as follows. Forms a receptor-activated non-selective calcium permeant cation channel. Mediates calcium-dependent phosphatidylserine externalization and apoptosis in neurons via its association with PLSCR1. Acts on distinct neuronal populations in the hypothalamus to regulate innate behaviors including feeding, anxiety (flight/fight/fear), socialization, and maternal care. This is Short transient receptor potential channel 5 (TRPC5) from Homo sapiens (Human).